Reading from the N-terminus, the 330-residue chain is tRNA U34 carboxymethyltransferase (330 aa).

Residues K91, W105, K110, G130, D152 to S154, I181 to E182, M196, Y200, and R315 each bind carboxy-S-adenosyl-L-methionine.

Belongs to the class I-like SAM-binding methyltransferase superfamily. CmoB family. In terms of assembly, homotetramer.

It catalyses the reaction carboxy-S-adenosyl-L-methionine + 5-hydroxyuridine(34) in tRNA = 5-carboxymethoxyuridine(34) in tRNA + S-adenosyl-L-homocysteine + H(+). Its function is as follows. Catalyzes carboxymethyl transfer from carboxy-S-adenosyl-L-methionine (Cx-SAM) to 5-hydroxyuridine (ho5U) to form 5-carboxymethoxyuridine (cmo5U) at position 34 in tRNAs. This chain is tRNA U34 carboxymethyltransferase, found in Shewanella frigidimarina (strain NCIMB 400).